Here is a 132-residue protein sequence, read N- to C-terminus: Protein NrdI (132 aa).

Belongs to the NrdI family.

Its function is as follows. Probably involved in ribonucleotide reductase function. This chain is Protein NrdI, found in Bartonella tribocorum (strain CIP 105476 / IBS 506).